The chain runs to 280 residues: uncharacterized protein (280 aa).

The next 7 helical transmembrane spans lie at 6–26 (YLVI…TPLV), 38–58 (VLAI…YLFP), 79–99 (IFLL…VFLK), 105–125 (GVLA…ELIF), 144–164 (NQIY…IILW), 171–191 (ISFF…ALMV), and 231–251 (LVFI…TLFA).

It is found in the cell membrane. This is an uncharacterized protein from Mycoplasma genitalium (strain ATCC 33530 / DSM 19775 / NCTC 10195 / G37) (Mycoplasmoides genitalium).